The following is a 341-amino-acid chain: Protein BEARSKIN2 (341 aa).

Residues 9–160 (VPPGFRFHPT…GWVVCRVFMK (152 aa)) form the NAC domain. Residues 109–166 (IGMRKTLVFYKGRAPHGQKTDWIMHEYRLEDADDPQANPSEDGWVVCRVFMKKNLFKV) mediate DNA binding.

Expressed throughout the root cap, in both columella (COL) and lateral root cap (LRC) cells, with higher levels in the COL-adjoining LRC than the upper LRC. Also present at low levels expression in the tips of cotyledons and the cotyledon vasculature, as weel as in vasculature of the first pair of true leaves and at the hydathodes.

Its subcellular location is the nucleus. Its function is as follows. Transcription activator. Together with BRN1 and SMB, regulates cellular maturation of root cap. Promotes the expression of genes involved in secondary cell walls (SCW) biosynthesis. This Arabidopsis thaliana (Mouse-ear cress) protein is Protein BEARSKIN2 (BRN2).